A 172-amino-acid polypeptide reads, in one-letter code: Type IV secretion system putative outer membrane lipoprotein BAB2_0057 (172 aa).

The signal sequence occupies residues 1–15 (MRTLVMVACAVSLAA). A lipid anchor (N-palmitoyl cysteine) is attached at Cys-16. Residue Cys-16 is the site of S-diacylglycerol cysteine attachment. One can recognise an OmpA-like domain in the interval 58–172 (WPARPPKQTV…RRVDIEILRK (115 aa)).

It is found in the cell outer membrane. Its function is as follows. The virB operon is essential for intracellular survival and is not involved in the invasion process. Constitutes a major determinant of virulence in mice. This protein is essential for pathogenesis in mice but is not required for intracellular survival. This chain is Type IV secretion system putative outer membrane lipoprotein BAB2_0057, found in Brucella abortus (strain 2308).